We begin with the raw amino-acid sequence, 448 residues long: Tubulin beta chain (448 aa).

GTP is bound by residues Q11, E69, S138, G142, T143, G144, N204, and N226. E69 serves as a coordination point for Mg(2+). The segment at 429–448 (SISDGEEQPYAEEAAYEAEE) is disordered. Positions 432–448 (DGEEQPYAEEAAYEAEE) are enriched in acidic residues.

The protein belongs to the tubulin family. As to quaternary structure, dimer of alpha and beta chains. A typical microtubule is a hollow water-filled tube with an outer diameter of 25 nm and an inner diameter of 15 nM. Alpha-beta heterodimers associate head-to-tail to form protofilaments running lengthwise along the microtubule wall with the beta-tubulin subunit facing the microtubule plus end conferring a structural polarity. Microtubules usually have 13 protofilaments but different protofilament numbers can be found in some organisms and specialized cells. The cofactor is Mg(2+).

The protein localises to the cytoplasm. It is found in the cytoskeleton. Its function is as follows. Tubulin is the major constituent of microtubules, a cylinder consisting of laterally associated linear protofilaments composed of alpha- and beta-tubulin heterodimers. Microtubules grow by the addition of GTP-tubulin dimers to the microtubule end, where a stabilizing cap forms. Below the cap, tubulin dimers are in GDP-bound state, owing to GTPase activity of alpha-tubulin. The chain is Tubulin beta chain from Aspergillus fumigatus (strain ATCC MYA-4609 / CBS 101355 / FGSC A1100 / Af293) (Neosartorya fumigata).